Here is a 353-residue protein sequence, read N- to C-terminus: Photosystem II D2 protein (353 aa).

The helical transmembrane segment at 41-61 threads the bilayer; it reads TAYLALGGWLTGTTFVTSWYT. Residue His-118 coordinates chlorophyll a. A helical transmembrane segment spans residues 125-141; the sequence is GFMLRQFEISRLVGIRP. Residues Gln-130 and Asn-143 each coordinate pheophytin a. Residues 153–166 traverse the membrane as a helical segment; that stretch reads VFVSVFLMYPLGQS. His-198 is a binding site for chlorophyll a. A helical transmembrane segment spans residues 208-228; sequence GALLCAIHGATVENTLYEDGE. A plastoquinone contacts are provided by His-215 and Phe-262. His-215 contributes to the Fe cation binding site. His-269 is a binding site for Fe cation. Residues 279–295 traverse the membrane as a helical segment; that stretch reads GLWTSSIGIIGLALNLR.

Belongs to the reaction center PufL/M/PsbA/D family. In terms of assembly, PSII is composed of 1 copy each of membrane proteins PsbA, PsbB, PsbC, PsbD, PsbE, PsbF, PsbH, PsbI, PsbJ, PsbK, PsbL, PsbM, PsbT, PsbX, PsbY, PsbZ, Psb30/Ycf12, peripheral proteins PsbO, CyanoQ (PsbQ), PsbU, PsbV and a large number of cofactors. It forms dimeric complexes. The cofactor is The D1/D2 heterodimer binds P680, chlorophylls that are the primary electron donor of PSII, and subsequent electron acceptors. It shares a non-heme iron and each subunit binds pheophytin, quinone, additional chlorophylls, carotenoids and lipids. There is also a Cl(-1) ion associated with D1 and D2, which is required for oxygen evolution. The PSII complex binds additional chlorophylls, carotenoids and specific lipids..

Its subcellular location is the host cellular thylakoid membrane. It carries out the reaction 2 a plastoquinone + 4 hnu + 2 H2O = 2 a plastoquinol + O2. In terms of biological role, photosystem II (PSII) is a light-driven water:plastoquinone oxidoreductase that uses light energy to abstract electrons from H(2)O, generating O(2) and a proton gradient subsequently used for ATP formation. It consists of a core antenna complex that captures photons, and an electron transfer chain that converts photonic excitation into a charge separation. The D1/D2 (PsbA/PsbD) reaction center heterodimer binds P680, the primary electron donor of PSII as well as several subsequent electron acceptors. D2 is needed for assembly of a stable PSII complex. The polypeptide is Photosystem II D2 protein (psbD) (Synechococcus phage S-PM2).